A 466-amino-acid polypeptide reads, in one-letter code: Glutamate--tRNA ligase (466 aa).

Positions 10 to 20 match the 'HIGH' region motif; sequence PSPTGYLHIGG. A 'KMSKS' region motif is present at residues 237–241; the sequence is RLSKR. Lys-240 serves as a coordination point for ATP.

Belongs to the class-I aminoacyl-tRNA synthetase family. Glutamate--tRNA ligase type 1 subfamily. As to quaternary structure, monomer.

The protein resides in the cytoplasm. It catalyses the reaction tRNA(Glu) + L-glutamate + ATP = L-glutamyl-tRNA(Glu) + AMP + diphosphate. Its function is as follows. Catalyzes the attachment of glutamate to tRNA(Glu) in a two-step reaction: glutamate is first activated by ATP to form Glu-AMP and then transferred to the acceptor end of tRNA(Glu). This is Glutamate--tRNA ligase from Syntrophotalea carbinolica (strain DSM 2380 / NBRC 103641 / GraBd1) (Pelobacter carbinolicus).